Consider the following 263-residue polypeptide: Single-stranded DNA-binding protein WHY1, chloroplastic (263 aa).

A chloroplast-targeting transit peptide spans 1 to 47 (MSQLLSTPLMAVNSNPRFLSSSSVLVTGGFAVKRHGFALKPTTKTVK). A required for ssDNA binding region spans residues 89–94 (KGKAAL). A Nuclear localization signal motif is present at residues 167–180 (KGKSDEGKVRKVLK).

The protein belongs to the Whirly family. Homotetramer.

The protein localises to the plastid. Its subcellular location is the chloroplast. It localises to the nucleus. Single-stranded DNA-binding protein that functions in both chloroplasts and nucleus. In chloroplasts, maintains plastid genome stability by preventing break-induced and short homology-dependent illegitimate recombinations. In nucleus, modulates telomere length homeostasis by inhibiting the action of the telomerase at the extreme termini of chromosomes. Is recruited to a distal element upstream of the kinesin KP1 to mediate the transcriptional repression of KP1. Is required for full salicylic acid-dependent plant disease resistance responses. Can bind double-stranded DNA in vivo. The protein is Single-stranded DNA-binding protein WHY1, chloroplastic (WHY1) of Arabidopsis thaliana (Mouse-ear cress).